A 374-amino-acid chain; its full sequence is tRNA-specific 2-thiouridylase MnmA (374 aa).

Residues 15-22 and Met-41 contribute to the ATP site; that span reads GMSGGVDS. Positions 101 to 103 are interaction with target base in tRNA; it reads NPD. Cys-106 functions as the Nucleophile in the catalytic mechanism. A disulfide bond links Cys-106 and Cys-206. Gly-130 lines the ATP pocket. An interaction with tRNA region spans residues 156-158; the sequence is KDQ. Residue Cys-206 is the Cysteine persulfide intermediate of the active site. The tract at residues 324 to 325 is interaction with tRNA; that stretch reads RY.

It belongs to the MnmA/TRMU family.

The protein resides in the cytoplasm. It carries out the reaction S-sulfanyl-L-cysteinyl-[protein] + uridine(34) in tRNA + AH2 + ATP = 2-thiouridine(34) in tRNA + L-cysteinyl-[protein] + A + AMP + diphosphate + H(+). Catalyzes the 2-thiolation of uridine at the wobble position (U34) of tRNA, leading to the formation of s(2)U34. The polypeptide is tRNA-specific 2-thiouridylase MnmA (Aromatoleum aromaticum (strain DSM 19018 / LMG 30748 / EbN1) (Azoarcus sp. (strain EbN1))).